A 1166-amino-acid polypeptide reads, in one-letter code: Reverse gyrase 2 (1166 aa).

Residues 1-40 (MINVMYKNSCPNCGGDISGDRLLNGLPCEACLPYINGIDD) form an RG N-terminal-type zinc finger. The Zn(2+) site is built by Cys10, Cys13, Cys28, and Cys31. ATP-binding positions include Gln92 and 109-116 (APTGLGKT). The 190-residue stretch at 96-285 (LRRLASNQSF…ALRLLTGFEP (190 aa)) folds into the Helicase ATP-binding domain. Residues 190–193 (DDAD) carry the DEAD box motif. Residues 576–1166 (FNISTGLLIV…VNPLKSEQNV (591 aa)) form a topoisomerase I region. Positions 580–743 (TGLLIVESPT…NVYRVVYHEI (164 aa)) constitute a Toprim domain. Residue Glu586 coordinates Mg(2+). The RG C-terminal-type zinc finger occupies 662–689 (IKKCLDCNKIFSSASDKCPYCGSANLQS). Zn(2+)-binding residues include Cys665, Cys668, Cys679, and Cys682. Position 712 (Asp712) interacts with Mg(2+). Residues 759 to 1157 (NTNLVMSQIV…EIFSEISTLV (399 aa)) form the Topo IA-type catalytic domain. Tyr903 acts as the O-(5'-phospho-DNA)-tyrosine intermediate in catalysis.

It in the N-terminal section; belongs to the DEAD box helicase family. DDVD subfamily. The protein in the C-terminal section; belongs to the type IA topoisomerase family. In terms of assembly, monomer. It depends on Zn(2+) as a cofactor. Requires Mg(2+) as cofactor.

Its subcellular location is the cytoplasm. The enzyme catalyses ATP + H2O = ADP + phosphate + H(+). Its activity is regulated as follows. At least one of the 2 proteins is inhibited by actinomycin D. Less sensitive to NaCl than TopR1, maximal positive supercoiling is observed with 100 mM NaCl; as NaCl rises higher than 400 mM supercoiling decreases. At 600 mM NaCl relaxes but does not introduce positive supercoils into negatively supercoiled substrate. In terms of biological role, modifies the topological state of DNA by introducing positive supercoils in an ATP-dependent process. A highly processive enzyme, it introduces a large number of positive supercoils directly in a negatively supercoiled substrate. At 75 degrees Celsius introduces more than 23 positive supercoils into pTZ18R DNA (probably 2860 bp), more than TopR1; unlike TopR1 little to no relaxation of the negatively supercoiled substrate is seen in the presence of ATP, in the absence of ATP no activity is seen. At 45 degrees Celsius the enzyme is slower and in vitro individual steps can be detected. It cleaves transiently a single DNA strand and remains covalently bound to the 5' DNA end through a tyrosine residue. May be involved in DNA damage response. May be involved in rewinding the DNA strands in the regions of the chromosome that have opened up to allow transcription or replication. Functionally, there are 2 genes for this protein in the cell. During exponential growth this is the more highly expressed isoform (about 125 molecules per cell at 80 degrees Celsius, about 117 molecules at 88 degrees Celsius); this isoform is less active at higher temperature. Grows actively at both 80 and 88 degrees Celsius; survives a long exposure at 45 degrees Celsius without DNA replication or cell division occurring. Experiments using whole cell extracts do not distinguish which isoform is present, the results are probably a mixture of the two forms. The protein is Reverse gyrase 2 of Saccharolobus solfataricus (strain ATCC 35092 / DSM 1617 / JCM 11322 / P2) (Sulfolobus solfataricus).